Here is a 96-residue protein sequence, read N- to C-terminus: Co-chaperonin GroES (96 aa).

Belongs to the GroES chaperonin family. Heptamer of 7 subunits arranged in a ring. Interacts with the chaperonin GroEL.

Its subcellular location is the cytoplasm. Functionally, together with the chaperonin GroEL, plays an essential role in assisting protein folding. The GroEL-GroES system forms a nano-cage that allows encapsulation of the non-native substrate proteins and provides a physical environment optimized to promote and accelerate protein folding. GroES binds to the apical surface of the GroEL ring, thereby capping the opening of the GroEL channel. This is Co-chaperonin GroES from Delftia acidovorans (strain DSM 14801 / SPH-1).